The sequence spans 508 residues: DNA-directed RNA polymerase subunit Rpo1C (508 aa).

Residues 1–123 (MASLLWRDTS…EIKEKYGENL (123 aa)) are unknown. Residues 124 to 508 (SEDVQKVLDD…IYKGYPKTKK (385 aa)) form a DNA-directed RNA polymerase subunit Rpo1C region.

Belongs to the RNA polymerase beta' chain family. In terms of assembly, part of the RNA polymerase complex.

It localises to the cytoplasm. The catalysed reaction is RNA(n) + a ribonucleoside 5'-triphosphate = RNA(n+1) + diphosphate. DNA-dependent RNA polymerase (RNAP) catalyzes the transcription of DNA into RNA using the four ribonucleoside triphosphates as substrates. Forms part of the jaw domain. This chain is DNA-directed RNA polymerase subunit Rpo1C, found in Thermoplasma acidophilum (strain ATCC 25905 / DSM 1728 / JCM 9062 / NBRC 15155 / AMRC-C165).